Consider the following 402-residue polypeptide: 1-deoxy-D-xylulose 5-phosphate reductoisomerase (402 aa).

NADPH-binding residues include Thr21, Gly22, Ser23, Ile24, Gly47, Asn50, and Asn127. Lys128 provides a ligand contact to 1-deoxy-D-xylulose 5-phosphate. Glu129 contacts NADPH. Asp151 contacts Mn(2+). Residues Ser152, Glu153, Ser177, and His200 each contribute to the 1-deoxy-D-xylulose 5-phosphate site. Glu153 lines the Mn(2+) pocket. Gly206 lines the NADPH pocket. Positions 213, 218, 219, and 222 each coordinate 1-deoxy-D-xylulose 5-phosphate. Residue Glu222 participates in Mn(2+) binding.

This sequence belongs to the DXR family. The cofactor is Mg(2+). It depends on Mn(2+) as a cofactor.

It carries out the reaction 2-C-methyl-D-erythritol 4-phosphate + NADP(+) = 1-deoxy-D-xylulose 5-phosphate + NADPH + H(+). It functions in the pathway isoprenoid biosynthesis; isopentenyl diphosphate biosynthesis via DXP pathway; isopentenyl diphosphate from 1-deoxy-D-xylulose 5-phosphate: step 1/6. Functionally, catalyzes the NADPH-dependent rearrangement and reduction of 1-deoxy-D-xylulose-5-phosphate (DXP) to 2-C-methyl-D-erythritol 4-phosphate (MEP). This is 1-deoxy-D-xylulose 5-phosphate reductoisomerase from Mycobacterium marinum (strain ATCC BAA-535 / M).